We begin with the raw amino-acid sequence, 981 residues long: Echinoderm microtubule-associated protein-like 4 (981 aa).

Methionine 1 carries the N-acetylmethionine modification. 2 disordered regions span residues 1 to 20 (MDGFAGSLDDSISAASTSDV) and 57 to 205 (DHVA…PKLI). A microtubule-binding region spans residues 1-249 (MDGFAGSLDD…IPSDVDNYDD (249 aa)). Residues serine 7, serine 13, serine 16, and serine 61 each carry the phosphoserine modification. The stretch at 14 to 63 (AASTSDVQDRLSALESRVQQQEDEITVLKAALADVLRRLAISEDHVASVK) forms a coiled coil. Threonine 96 carries the phosphothreonine modification. A compositionally biased stretch (basic and acidic residues) spans 114–134 (GTEKKKEKPQGQREKKEESHS). Serine 134 is modified (phosphoserine; by NEK7). The span at 137–155 (QSPQIRASPSPQPSSQPLQ) shows a compositional bias: low complexity. Serine 144 is subject to Phosphoserine; by NEK6. Serine 146 is subject to Phosphoserine; by NEK7. Serine 171 carries the phosphoserine modification. Basic and acidic residues predominate over residues 176–193 (SPAEKSHNSWENSDDSRN). Serine 200 is subject to Phosphoserine. Threonine 201 carries the post-translational modification Phosphothreonine. Position 226 is a phosphotyrosine (tyrosine 226). The residue at position 237 (threonine 237) is a Phosphothreonine. WD repeat units follow at residues 259 to 297 (LKLEWAYGYRGKDCRANVYLLPTGKIVYFIASVVVLFNY), 301 to 348 (TQRH…VWDS), 356 to 396 (IIGL…VWDW), 403 to 438 (AEIKTTNEVVLAVEFHPTDANTIITCGKSHIFFWTW), and 445 to 484 (RKQGIFGKYEKPKFVQCLAFLGNGDVLTGDSGGVMLIWSK). Threonine 490 carries the phosphothreonine; by NEK6 modification. WD repeat units lie at residues 500–538 (QISKQIKAHDGSVFTLCQMRNGMLLTGGGKDRKIILWDH), 543–579 (EREIEVPDQYGTIRAVAEGKADQFLVGTSRNFILRGT), 582–621 (DGFQIEVQGHTDELWGLATHPFKDLLLTCAQDRQVCLWNS), 625–662 (RLEWTRLVDEPGHCADFHPSGTVVAIGTHSGRWFVLDA), 668–704 (VSIHTDGNEQLSVMRYSIDGTFLAVGSHDNFIYLYVV), 711–750 (YSRYGRCTGHSSYITHLDWSPDNKYIMSNSGDYEILYWDI), 760–818 (RSDC…LFQY), and 825–864 (APSHKYSAHSSHVTNVSFTHNDSHLISTGGKDMSIIQWKL). At threonine 609 the chain carries Phosphothreonine; by NEK6 and NEK7. Polar residues predominate over residues 881 to 893 (LTKAPVSSTESVI). Residues 881 to 981 (LTKAPVSSTE…EDQQDPSPSS (101 aa)) form a disordered region. 2 positions are modified to phosphoserine: serine 891 and serine 895. Phosphothreonine occurs at positions 897 and 899. Serine 903 carries the phosphoserine modification. Positions 916–931 (ISSSPTLLENSLEQTV) are enriched in polar residues. Positions 937 to 946 (HSEEESEEGS) are enriched in acidic residues. Serine 978 bears the Phosphoserine mark. At serine 981 the chain carries Phosphoserine; by NEK6 and NEK7.

The protein belongs to the WD repeat EMAP family. In terms of assembly, homotrimer; self-association is mediated by the N-terminal coiled coil. Interacts (via WD repeats) with NUDC. Interacts with alpha- and beta-tubulin during mitosis. Phosphorylated during mitosis. Phosphorylation at Ser-144 and Ser-146 promotes its dissociation from microtubules during mitosis which is required for efficient chromosome congression.

Its subcellular location is the cytoplasm. The protein localises to the cytoskeleton. It localises to the spindle. The protein resides in the microtubule organizing center. It is found in the midbody. Essential for the formation and stability of microtubules (MTs). Required for the organization of the mitotic spindle and for the proper attachment of kinetochores to MTs. Promotes the recruitment of NUDC to the mitotic spindle for mitotic progression. In Homo sapiens (Human), this protein is Echinoderm microtubule-associated protein-like 4 (EML4).